The chain runs to 276 residues: Membrane protein insertase YidC 2 (276 aa).

A signal peptide spans 1-22; the sequence is MGVKKKLKLTSLLGLSLLIMTA. C23 carries the N-palmitoyl cysteine lipid modification. C23 is lipidated: S-diacylglycerol cysteine. The next 4 membrane-spanning stretches (helical) occupy residues 58–78, 130–150, 169–189, and 207–227; these read ISIGVGIILFTVLIRTVLLPV, SDSLWPILIQMPVILALFQAL, VDTTLVLPILAAVFTFLSTWL, and GIPVLIFIFAVYAPGGVALYW.

It belongs to the OXA1/ALB3/YidC family. Type 2 subfamily. In terms of assembly, interacts with KhpB (also called EloR/Jag).

It is found in the cell membrane. In terms of biological role, required for the insertion and/or proper folding and/or complex formation of integral membrane proteins into the membrane. Involved in integration of membrane proteins that insert both dependently and independently of the Sec translocase complex, as well as at least some lipoproteins. In Streptococcus pneumoniae (strain ATCC BAA-255 / R6), this protein is Membrane protein insertase YidC 2.